The primary structure comprises 356 residues: uncharacterized protein (356 aa).

A helical transmembrane segment spans residues 8–28 (ILGFVLFVLGAAIFLTEVMHS).

This sequence to C.elegans C41C4.1 and C18B2.1.

The protein localises to the membrane. This is an uncharacterized protein from Caenorhabditis elegans.